The primary structure comprises 906 residues: Ectonucleotide pyrophosphatase/phosphodiesterase family member 1 (906 aa).

The tract at residues 1-22 (MERDGDQAGHGPRHGSAGNGRE) is disordered. At 1-58 (MERDGDQAGHGPRHGSAGNGRELESPAAASLLAPMDLGEEPLEKAERARPAKDPNTYK) the chain is on the cytoplasmic side. The residue at position 25 (Ser25) is a Phosphoserine. Positions 27 to 34 (AAASLLAP) match the Di-leucine motif motif. A helical; Signal-anchor for type II membrane protein transmembrane segment spans residues 59–79 (VLSLVLSVCVLTTILGCIFGL). Residues 80 to 906 (KPSCAKEVKS…THLPIFSQED (827 aa)) lie on the Extracellular side of the membrane. SMB domains are found at residues 86-126 (EVKS…VEPT) and 127-171 (HIWT…DKKS). 10 disulfide bridges follow: Cys90–Cys104, Cys94–Cys122, Cys102–Cys115, Cys108–Cys114, Cys131–Cys148, Cys136–Cys166, Cys146–Cys159, Cys152–Cys158, Cys177–Cys223, and Cys185–Cys397. N-linked (GlcNAc...) asparagine glycosylation is present at Asn161. The phosphodiesterase stretch occupies residues 173 to 573 (VEETCESIDT…APNNGSHGSL (401 aa)). The AMP site is built by Asp200, Thr238, and Asn259. Zn(2+)-binding residues include Asp200 and Thr238. The active-site AMP-threonine intermediate is Thr238. Residues Thr238 and Asn259 each contribute to the CMP site. DTMP-binding residues include Thr238 and Asn259. The GMP site is built by Thr238 and Asn259. Position 238 is a phosphothreonine (Thr238). The N-linked (GlcNAc...) asparagine glycan is linked to Asn267. GMP is bound by residues Leu272, Lys277, and Tyr322. Positions 277 and 322 each coordinate AMP. CMP contacts are provided by Lys277 and Tyr322. Tyr322 is a binding site for dTMP. Asn323 is a glycosylation site (N-linked (GlcNAc...) asparagine). An AMP-binding site is contributed by Asp358. Zn(2+) contacts are provided by Asp358, His362, Asp405, and His406. Asp358 lines the CMP pocket. A dTMP-binding site is contributed by Asp358. A GMP-binding site is contributed by Asp358. His362 contacts 2',3'-cGAMP. His406 contributes to the AMP binding site. Position 406 (His406) interacts with CMP. His406 contacts dTMP. Residue His406 participates in GMP binding. Intrachain disulfides connect Cys413–Cys512, Cys462–Cys849, Cys596–Cys653, Cys607–Cys707, Cys609–Cys692, and Cys819–Cys829. The N-linked (GlcNAc...) asparagine glycan is linked to Asn459. 2',3'-cGAMP is bound at residue Ser514. His517 contacts AMP. A Zn(2+)-binding site is contributed by His517. His517 provides a ligand contact to CMP. A dTMP-binding site is contributed by His517. Residue His517 coordinates GMP. N-linked (GlcNAc...) asparagine glycosylation is found at Asn567 and Asn624. The segment at 579–628 (KPIYNPSHPKEEGFLSQCPIKSTSNDLGCTCDPWIVPIKDFEKQLNLTTE) is linker. The segment at 635 to 906 (HMTVPYGRPR…THLPIFSQED (272 aa)) is nuclease-like domain. 5 residues coordinate Ca(2+): Asp781, Asp783, Asp785, Arg787, and Asp789.

The protein belongs to the nucleotide pyrophosphatase/phosphodiesterase family. In terms of assembly, ectonucleotide pyrophosphatase/phosphodiesterase family member 1: Homodimer. Ectonucleotide pyrophosphatase/phosphodiesterase family member 1: Interacts with INSR; leading to inhibit INSR autophosphorylation and subsequent activation of INSR kinase activity. Ectonucleotide pyrophosphatase/phosphodiesterase family member 1, secreted form: Monomeric. The cofactor is Zn(2+). Post-translationally, N-glycosylated. The secreted form is produced through cleavage at Lys-85 by intracellular processing. Selectively expressed on the surface of antibody-secreting cells. Expressed in osteocytes and osteoclasts.

The protein localises to the cell membrane. It is found in the basolateral cell membrane. It localises to the secreted. It catalyses the reaction Hydrolytically removes 5'-nucleotides successively from the 3'-hydroxy termini of 3'-hydroxy-terminated oligonucleotides.. It carries out the reaction a ribonucleoside 5'-triphosphate + H2O = a ribonucleoside 5'-phosphate + diphosphate + H(+). The catalysed reaction is ATP + H2O = AMP + diphosphate + H(+). The enzyme catalyses UTP + H2O = UMP + diphosphate + H(+). It catalyses the reaction GTP + H2O = GMP + diphosphate + H(+). It carries out the reaction CTP + H2O = CMP + diphosphate + H(+). The catalysed reaction is 2',3'-cGAMP + 2 H2O = GMP + AMP + 2 H(+). The enzyme catalyses P(1),P(4)-bis(5'-adenosyl) tetraphosphate + H2O = AMP + ATP + 2 H(+). It catalyses the reaction 3',5'-cyclic AMP + H2O = AMP + H(+). At low concentrations of ATP, a phosphorylated intermediate is formed which inhibits further hydrolysis. Functionally, nucleotide pyrophosphatase that generates diphosphate (PPi) and functions in bone mineralization and soft tissue calcification by regulating pyrophosphate levels. PPi inhibits bone mineralization and soft tissue calcification by binding to nascent hydroxyapatite crystals, thereby preventing further growth of these crystals. Preferentially hydrolyzes ATP, but can also hydrolyze other nucleoside 5' triphosphates such as GTP, CTP and UTP to their corresponding monophosphates with release of pyrophosphate, as well as diadenosine polyphosphates, and also 3',5'-cAMP to AMP. May also be involved in the regulation of the availability of nucleotide sugars in the endoplasmic reticulum and Golgi, and the regulation of purinergic signaling. Inhibits ectopic joint calcification and maintains articular chondrocytes by repressing hedgehog signaling; it is however unclear whether hedgehog inhibition is direct or indirect. Appears to modulate insulin sensitivity. Also involved in melanogenesis. Also able to hydrolyze 2',3'-cGAMP (cyclic GMP-AMP), a second messenger that activates TMEM173/STING and triggers type-I interferon production. 2',3'-cGAMP degradation takes place in the lumen or extracellular space, and not in the cytosol where it is produced; the role of 2',3'-cGAMP hydrolysis is therefore unclear. Not able to hydrolyze the 2',3'-cGAMP linkage isomer 3',3'-cGAMP. The sequence is that of Ectonucleotide pyrophosphatase/phosphodiesterase family member 1 from Mus musculus (Mouse).